The chain runs to 293 residues: 4-hydroxybenzoate octaprenyltransferase (293 aa).

8 helical membrane passes run 26 to 46 (IGTL…AKGM), 49 to 69 (IKVL…GCII), 102 to 122 (LFAL…PLVV), 148 to 168 (FLGI…LGEV), 173 to 193 (WWLF…YAMI), 217 to 237 (WIAV…LSAE), 240 to 260 (FIYA…QRLI), and 272 to 292 (FLNN…DYLL).

This sequence belongs to the UbiA prenyltransferase family. Requires Mg(2+) as cofactor.

The protein resides in the cell inner membrane. It catalyses the reaction all-trans-octaprenyl diphosphate + 4-hydroxybenzoate = 4-hydroxy-3-(all-trans-octaprenyl)benzoate + diphosphate. It participates in cofactor biosynthesis; ubiquinone biosynthesis. Its function is as follows. Catalyzes the prenylation of para-hydroxybenzoate (PHB) with an all-trans polyprenyl group. Mediates the second step in the final reaction sequence of ubiquinone-8 (UQ-8) biosynthesis, which is the condensation of the polyisoprenoid side chain with PHB, generating the first membrane-bound Q intermediate 3-octaprenyl-4-hydroxybenzoate. The protein is 4-hydroxybenzoate octaprenyltransferase of Shewanella denitrificans (strain OS217 / ATCC BAA-1090 / DSM 15013).